Here is a 204-residue protein sequence, read N- to C-terminus: Urease accessory protein UreG (204 aa).

12 to 19 (GPVGSGKT) contributes to the GTP binding site.

It belongs to the SIMIBI class G3E GTPase family. UreG subfamily. In terms of assembly, homodimer. UreD, UreF and UreG form a complex that acts as a GTP-hydrolysis-dependent molecular chaperone, activating the urease apoprotein by helping to assemble the nickel containing metallocenter of UreC. The UreE protein probably delivers the nickel.

The protein localises to the cytoplasm. Functionally, facilitates the functional incorporation of the urease nickel metallocenter. This process requires GTP hydrolysis, probably effectuated by UreG. In Ectopseudomonas mendocina (strain ymp) (Pseudomonas mendocina), this protein is Urease accessory protein UreG.